We begin with the raw amino-acid sequence, 117 residues long: MDKKASRIRRATRARRKIAELGATRLVVHRTPRHVYAQVIAANGSEVIAAASTVEKAIREQVKYTGNIDAAKAVGKAVAERALEKGVTVVAFDRSGFQYHGRVAALADSAREAGLKF.

This sequence belongs to the universal ribosomal protein uL18 family. Part of the 50S ribosomal subunit; part of the 5S rRNA/L5/L18/L25 subcomplex. Contacts the 5S and 23S rRNAs.

Its function is as follows. This is one of the proteins that bind and probably mediate the attachment of the 5S RNA into the large ribosomal subunit, where it forms part of the central protuberance. The polypeptide is Large ribosomal subunit protein uL18 (Vibrio cholerae serotype O1 (strain ATCC 39541 / Classical Ogawa 395 / O395)).